The chain runs to 178 residues: Membrane-spanning protein YciB (178 aa).

The next 5 membrane-spanning stretches (helical) occupy residues 22–42 (IFIA…ITSI), 52–72 (LINL…HNSS), 76–96 (WKVT…YLFI), 121–141 (LFWS…ILYF), and 151–171 (IFGL…YIYF).

It belongs to the YciB family.

Its subcellular location is the cell membrane. Functionally, plays a role in cell envelope biogenesis, maintenance of cell envelope integrity and membrane homeostasis. This chain is Membrane-spanning protein YciB, found in Buchnera aphidicola subsp. Baizongia pistaciae (strain Bp).